The following is a 223-amino-acid chain: MPCLLVAGLGNPSAKYQNTRHNIGFMVLDFLSKELDFDFSFDKKFNAEVGAINIGPHKVFFLKPQTFMNLSGEAINPFVRYFDITHTFVIHDDIDIGFGDMRFKYGGSSGGHNGLKSIDSFMGDTYFRLRFGVGRSANKNVVEYVLSDFNAQEREQLEGLIAHAKEAVMSFCNMAQYPKEHILTHLQQYFTLKIPKLTPSQTQNNESFATQFSQMQYTRFTQG.

TRNA is bound at residue Y16. H21 functions as the Proton acceptor in the catalytic mechanism. Positions 67, 69, and 113 each coordinate tRNA.

Belongs to the PTH family. In terms of assembly, monomer.

The protein resides in the cytoplasm. The enzyme catalyses an N-acyl-L-alpha-aminoacyl-tRNA + H2O = an N-acyl-L-amino acid + a tRNA + H(+). In terms of biological role, hydrolyzes ribosome-free peptidyl-tRNAs (with 1 or more amino acids incorporated), which drop off the ribosome during protein synthesis, or as a result of ribosome stalling. Catalyzes the release of premature peptidyl moieties from peptidyl-tRNA molecules trapped in stalled 50S ribosomal subunits, and thus maintains levels of free tRNAs and 50S ribosomes. The sequence is that of Peptidyl-tRNA hydrolase from Helicobacter hepaticus (strain ATCC 51449 / 3B1).